The chain runs to 499 residues: Putative protease Do-like 12, mitochondrial (499 aa).

The transit peptide at 1–24 directs the protein to the mitochondrion; the sequence is MLFRSCVGMVSRYSRALLPTITIS. The serine protease stretch occupies residues 94–259; that stretch reads GGSGFAIAGK…IPTPIIRHFI (166 aa). Active-site charge relay system residues include histidine 110, aspartate 144, and serine 222. The PDZ domain occupies 272–356; sequence GSLVLSCQSM…DENILVKVLR (85 aa).

It belongs to the peptidase S1C family.

The protein resides in the mitochondrion matrix. Functionally, putative serine protease. In Arabidopsis thaliana (Mouse-ear cress), this protein is Putative protease Do-like 12, mitochondrial (DEGP12).